A 437-amino-acid polypeptide reads, in one-letter code: GTPase Era, mitochondrial (437 aa).

The N-terminal 20 residues, 1-20 (MAAPRRYFPGIVRALLGAWQ), are a transit peptide targeting the mitochondrion. Positions 112–330 (RVLRVVLLGA…QYLLTQAQPG (219 aa)) constitute an Era-type G domain. Positions 120 to 127 (GAPNAGKS) are G1. 120–127 (GAPNAGKS) contributes to the GTP binding site. The tract at residues 146–150 (HTTRC) is G2. The G3 stretch occupies residues 167–170 (DTPG). Position 167-171 (167-171 (DTPGI)) interacts with GTP. S173 is modified (phosphoserine). 236-239 (NKVD) serves as a coordination point for GTP. Residues 236–239 (NKVD) form a G4 region. The segment at 272–293 (SRPSTHCPGPETEDPNTHAVRS) is disordered. Positions 308–310 (LSA) are G5. A KH type-2 domain is found at 360-437 (LPEEVPYSVQ…LLRLSVKLLK (78 aa)).

This sequence belongs to the TRAFAC class TrmE-Era-EngA-EngB-Septin-like GTPase superfamily. Era GTPase family.

Its subcellular location is the mitochondrion matrix. The protein localises to the mitochondrion inner membrane. Functionally, probable GTPase that plays a role in the mitochondrial ribosomal small subunit assembly. Specifically binds the 12S mitochondrial rRNA (12S mt-rRNA) to a 33 nucleotide section delineating the 3' terminal stem-loop region. May act as a chaperone that protects the 12S mt-rRNA on the 28S mitoribosomal subunit during ribosomal small subunit assembly. The chain is GTPase Era, mitochondrial (Eral1) from Rattus norvegicus (Rat).